A 179-amino-acid polypeptide reads, in one-letter code: Inner membrane-spanning protein YciB (179 aa).

Transmembrane regions (helical) follow at residues 11 to 31, 52 to 69, 71 to 91, 121 to 141, and 149 to 169; these read ILFF…TLII, LIMG…AYFN, LEFL…ILLV, LGWA…SQYL, and FKTF…GVYI.

The protein belongs to the YciB family.

The protein resides in the cell inner membrane. Functionally, plays a role in cell envelope biogenesis, maintenance of cell envelope integrity and membrane homeostasis. The chain is Inner membrane-spanning protein YciB from Histophilus somni (strain 129Pt) (Haemophilus somnus).